The primary structure comprises 205 residues: MFLRHCITFTLIALLAGCAGFGSREALQGHGDPQQWRAHKAQLSSLDGWQINGKVGIRAPRDSGSGTLFWLQRQDYYDIRLAGPLGRGAARLTGRPGGVVLEVANQGRYEATSPEALLEEQLGWQLPVSHLVWWVRGLPAPDSKSKLTLDGDSRLASLDQDGWQVQYLSYTEQNGYWLPERLKLHGKDLDVTLVVKDWQPRQLGH.

The first 17 residues, 1–17 (MFLRHCITFTLIALLAG), serve as a signal peptide directing secretion. Cys-18 carries the N-palmitoyl cysteine lipid modification. Cys-18 carries the S-diacylglycerol cysteine lipid modification.

It belongs to the LolB family. Monomer.

It is found in the cell outer membrane. Its function is as follows. Plays a critical role in the incorporation of lipoproteins in the outer membrane after they are released by the LolA protein. The polypeptide is Outer-membrane lipoprotein LolB (Pseudomonas putida (strain ATCC 47054 / DSM 6125 / CFBP 8728 / NCIMB 11950 / KT2440)).